The primary structure comprises 93 residues: Small ribosomal subunit protein uS19 (93 aa).

Belongs to the universal ribosomal protein uS19 family.

Protein S19 forms a complex with S13 that binds strongly to the 16S ribosomal RNA. The protein is Small ribosomal subunit protein uS19 of Helicobacter acinonychis (strain Sheeba).